We begin with the raw amino-acid sequence, 1257 residues long: RAF-like serine/threonine-protein kinase 24 (1257 aa).

Positions 1–21 (MDQAKGYEHVRYTAPDPRDEG) are disordered. Positions 191–277 (PRDQKLRYVG…EKPRMFLFSS (87 aa)) constitute a PB1 domain. 2 stretches are compositionally biased toward basic and acidic residues: residues 457-480 (VQDP…KVND) and 493-502 (KEPKMRRESS). Disordered regions lie at residues 457–629 (VQDP…RTSQ) and 761–789 (SQSE…VPQG). Ser-474 is subject to Phosphoserine. Over residues 533–548 (TQTSSSTPDPSSSTLS) the composition is skewed to low complexity. A compositionally biased stretch (basic and acidic residues) spans 550-576 (KSLRKSEDHVENNLSAKEPKMRKEHST). Ser-555 is modified (phosphoserine). The span at 583–593 (SVSSVSSDSMV) shows a compositional bias: low complexity. Over residues 769–782 (ETNTPEHVSQTETS) the composition is skewed to polar residues. Residue Ser-777 is modified to Phosphoserine. The Protein kinase domain maps to 974 to 1239 (LEELKELGSG…PEIARRLRTM (266 aa)). ATP-binding positions include 980-988 (LGSGTFGTV) and Lys-1001. Ser-1013 is subject to Phosphoserine. The active-site Proton acceptor is the Asp-1102.

It belongs to the protein kinase superfamily. Ser/Thr protein kinase family. Hyperphosphorylated in response to auxin in an ABP1- and TMK1-dependent manner.

Its subcellular location is the cytoplasm. The catalysed reaction is L-seryl-[protein] + ATP = O-phospho-L-seryl-[protein] + ADP + H(+). It catalyses the reaction L-threonyl-[protein] + ATP = O-phospho-L-threonyl-[protein] + ADP + H(+). Its activity is regulated as follows. Activated by auxin via rapid phosphorylation downstream of ABP1 and TMK1 signaling. RAF-like protein kinase acting, together with RAF20, as a central mediator of a fast response pathway to auxin involving proteins phosphorylation, and leading to rapid cellular responses including membrane depolarization and cytoplasmic streaming. Required for general growth and developmental process. The sequence is that of RAF-like serine/threonine-protein kinase 24 from Arabidopsis thaliana (Mouse-ear cress).